The chain runs to 344 residues: SAGA complex subunit Sgf73 (344 aa).

Over residues 123-143 (NKDVNNGNNAPIKNGVKSTAK) the composition is skewed to polar residues. The disordered stretch occupies residues 123 to 196 (NKDVNNGNNA…KKKNPKVKGP (74 aa)). The 67-residue stretch at 190-256 (NPKVKGPVDV…KNQVKIQRQI (67 aa)) folds into the SCA7 domain.

The protein belongs to the ataxin-7 family. In terms of assembly, component of the 1.8 MDa SAGA (Spt-Ada-Gcn5 acetyltransferase) complex, which is composed of 19 subunits tra1, spt7, taf5, ngg1/ada3, sgf73, spt20, spt8, taf12, taf6, hfi1/ada1, ubp8, gcn5, ada2, spt3, sgf29, taf10, taf9, sgf11 and sus1. The SAGA complex is composed of 4 modules, namely the HAT (histone acetyltransferase) module (gcn5, ada2, ngg1/ada3 and sgf29), the DUB (deubiquitinating) module (ubp8, sgf11, sgf73 and sus1), the core or TAF (TBP-associated factor) module (taf5, taf6, taf9, taf10 and taf12), and the Tra1 or SPT (Suppressor of Ty) module (tra1, hfi1/ada1, spt3, spt7, spt8 and spt20). The Tra1/SPT module binds activators, the core module recruits TBP (TATA-binding protein), the HAT module contains the histone H3 acetyltransferase gcn5, and the DUB module comprises the histone H2B deubiquitinase ubp8. Interacts with the RITS subunits ago1 and chp1.

It is found in the nucleus. Functionally, component of the transcription coactivator SAGA complex. SAGA acts as a general cofactor required for essentially all RNA polymerase II transcription. At the promoters, SAGA is required for transcription pre-initiation complex (PIC) recruitment. It influences RNA polymerase II transcriptional activity through different activities such as TBP interaction (via core/TAF module) and promoter selectivity, interaction with transcription activators (via Tra1/SPT module), and chromatin modification through histone acetylation (via HAT module) and deubiquitination (via DUB module). SAGA preferentially acetylates histones H3 (to form H3K9ac, H3K14ac, H3K18ac and H3K23ac) and H2B and deubiquitinates histone H2B. SAGA interacts with DNA via upstream activating sequences (UASs). Sgf73 tethers the DUB module to the rest of the SAGA complex through its central domain and activates the ubiquitin hydrolase ubp8 by maintaining its catalytic domain in an active conformation. Sgf73 mediates recruitment of the TREX-2 mRNA export factors sac3 and thp1 to SAGA, which is crucial to target TREX-2 to the nuclear pore complex (NPC) necessary for export of mRNA. Upon environmental stress, involved in the bypass of the canonical mRNA export process for the immediate export of stress-related transcripts to maintain proteostasis. Independent on its function in SAGA, promotes the assembly of the RNA-induced transcriptional silencing complex (RITS) and is required for pericentromeric heterochromatin silencing and the generation of siRNA. The chain is SAGA complex subunit Sgf73 (sgf73) from Schizosaccharomyces pombe (strain 972 / ATCC 24843) (Fission yeast).